We begin with the raw amino-acid sequence, 454 residues long: N-myc 2 proto-oncogene protein (454 aa).

Disordered regions lie at residues 132 to 166, 230 to 269, and 325 to 374; these read SEKM…HSGT, VAAP…DEEE, and PSPY…VRRR. Residues 151–161 show a composition bias toward low complexity; it reads PGAGAASPAGR. Residues 256-269 show a composition bias toward acidic residues; sequence ALSDEVDEEEDEEE. A compositionally biased stretch (basic and acidic residues) spans 363-374; the sequence is RKSDSEDSVRRR. The region spanning 371 to 423 is the bHLH domain; that stretch reads VRRRNHNILERQRRNDLRSSFTTLRDHVPELVKNEKAAKVVILKKACEYVHYL. Residues 423–444 are leucine-zipper; the sequence is LQAKEHQLLMEKEKLQARQQQL.

Efficient DNA binding requires dimerization with another bHLH protein.

The protein localises to the nucleus. The protein is N-myc 2 proto-oncogene protein (N-MYC2) of Marmota monax (Woodchuck).